The sequence spans 1412 residues: Protein MODIFIER OF SNC1 1 (1412 aa).

Disordered stretches follow at residues M1–P276, G384–P437, Q472–Q798, N827–I888, D909–G1144, and A1156–N1412. Over residues S56–S103 the composition is skewed to polar residues. At S72 the chain carries Phosphoserine. Residues S109–S119 are compositionally biased toward low complexity. A compositionally biased stretch (polar residues) spans R120–V135. Basic and acidic residues-rich tracts occupy residues A197–R207 and A236–L267. Residues R478 to A488 are compositionally biased toward basic and acidic residues. Polar residues-rich tracts occupy residues K517 to V531, Q539 to S553, S565 to N581, and R610 to E639. Basic and acidic residues predominate over residues D665 to I713. Positions K667 to G717 form a coiled coil. Polar residues-rich tracts occupy residues G738–E749, K756–N779, and G829–S847. The span at P850–H862 shows a compositional bias: basic residues. Residues V877 to I888 are compositionally biased toward basic and acidic residues. S883 is modified (phosphoserine). 2 stretches are compositionally biased toward polar residues: residues G914–S938 and Q983–S1003. Positions K1006–A1023 are enriched in basic and acidic residues. A compositionally biased stretch (polar residues) spans L1056–S1070. Positions K1071–R1084 are enriched in basic residues. The span at F1106–N1137 shows a compositional bias: polar residues. Basic and acidic residues-rich tracts occupy residues D1191 to K1202, K1222 to W1232, and G1242 to P1251. Composition is skewed to polar residues over residues G1266–S1286 and V1293–Q1307. Basic and acidic residues-rich tracts occupy residues S1338–Y1351 and Y1359–K1369. The span at Q1384–G1397 shows a compositional bias: low complexity. Residues G1400 to N1412 are compositionally biased toward gly residues.

As to quaternary structure, interacts with TCP14 and TCP15.

Its function is as follows. Involved in the regulation of the chromatin structure and DNA methylation at the SNC1 locus. Regulates the expression of SNC1 at chromatin level. In Arabidopsis thaliana (Mouse-ear cress), this protein is Protein MODIFIER OF SNC1 1 (MOS1).